Here is a 64-residue protein sequence, read N- to C-terminus: Large ribosomal subunit protein bL35 (64 aa).

2 disordered regions span residues Met-1–Gly-20 and Pro-37–Gly-64.

It belongs to the bacterial ribosomal protein bL35 family.

This Mycobacterium sp. (strain JLS) protein is Large ribosomal subunit protein bL35.